Here is a 466-residue protein sequence, read N- to C-terminus: Adenosylhomocysteinase (466 aa).

Residues Thr-57, Asp-132, and Glu-192 each contribute to the substrate site. 193 to 195 is an NAD(+) binding site; the sequence is TTT. Residues Lys-222 and Asp-226 each coordinate substrate. NAD(+) is bound by residues Asn-227, 256–261, Glu-279, Asn-314, 335–337, and Asn-380; these read GYGDVG and IGH.

This sequence belongs to the adenosylhomocysteinase family. The cofactor is NAD(+).

It is found in the cytoplasm. The enzyme catalyses S-adenosyl-L-homocysteine + H2O = L-homocysteine + adenosine. It functions in the pathway amino-acid biosynthesis; L-homocysteine biosynthesis; L-homocysteine from S-adenosyl-L-homocysteine: step 1/1. Its function is as follows. May play a key role in the regulation of the intracellular concentration of adenosylhomocysteine. In Sinorhizobium medicae (strain WSM419) (Ensifer medicae), this protein is Adenosylhomocysteinase.